Reading from the N-terminus, the 169-residue chain is Secretory-abundant heat soluble protein 1 (169 aa).

The N-terminal stretch at Met1–Gly19 is a signal peptide. Positions Glu31–Pro60 are SAHS-c1. The interval Trp75 to Glu103 is SAHS-c2. N-linked (GlcNAc...) asparagine glycosylation occurs at Asn109. Positions Lys116 to Lys165 are SAHS-c3.

This sequence belongs to the Secretory-abundant heat soluble protein (SAHS) family.

The protein resides in the secreted. Secreted heat soluble protein acting as a molecular shield in water-deficient condition. Tardigrade-specific intrinsically disordered proteins (TDPs) are essential for desiccation tolerance by forming non-crystalline amorphous solids upon desiccation, and this vitrified state mirrors their protective capabilities. The polypeptide is Secretory-abundant heat soluble protein 1 (Ramazzottius varieornatus (Water bear)).